The following is a 204-amino-acid chain: MIPTSDITGLILAGGRGSRMGGVDKGLQVFNGAPMAMHALMRLSPQVGHVLINANRNLAAYESFGVPVVVDAVPDFAGPLAGILAGLEQCQTPYLLTAPCDSPFVPTDLAARLSTALAEAGARIAMPVTLEPDENGRPRRQVQPVFCLIDAALADDLTTYLQQGGRKIDAWTARHPSVEVVFDDAAAFANINTLAELRQLAERR.

Residues 12–14, lysine 25, asparagine 53, aspartate 71, and aspartate 101 each bind GTP; that span reads LAG. Aspartate 101 is a binding site for Mg(2+).

It belongs to the MobA family. As to quaternary structure, monomer. Requires Mg(2+) as cofactor.

Its subcellular location is the cytoplasm. It catalyses the reaction Mo-molybdopterin + GTP + H(+) = Mo-molybdopterin guanine dinucleotide + diphosphate. Functionally, transfers a GMP moiety from GTP to Mo-molybdopterin (Mo-MPT) cofactor (Moco or molybdenum cofactor) to form Mo-molybdopterin guanine dinucleotide (Mo-MGD) cofactor. This is Molybdenum cofactor guanylyltransferase from Ralstonia nicotianae (strain ATCC BAA-1114 / GMI1000) (Ralstonia solanacearum).